The chain runs to 141 residues: Hemoglobin subunit alpha-A (141 aa).

A Globin domain is found at 1 to 141 (VLSAADKTNV…VSTVLTAKYR (141 aa)). Histidine 58 is an O2 binding site. A heme b-binding site is contributed by histidine 87.

The protein belongs to the globin family. As to quaternary structure, heterotetramer of two alpha chains and two beta chains. As to expression, red blood cells.

Involved in oxygen transport from the lung to the various peripheral tissues. In Eudynamys scolopaceus (Western koel), this protein is Hemoglobin subunit alpha-A (HBAA).